A 430-amino-acid polypeptide reads, in one-letter code: Alpha-(1-&gt;3)-arabinofuranosyltransferase (430 aa).

The next 10 helical transmembrane spans lie at 26 to 46, 114 to 134, 136 to 156, 160 to 180, 194 to 214, 218 to 238, 276 to 296, 307 to 327, 352 to 372, and 381 to 401; these read APSTATVLRSVLWPIAILSVI, WYISFNVLAFLIAAYLMLRIF, YTLSSVAAPALVLAMFCTESV, LVFTNINGCMLLGAVLFFRWL, AIGLTLVVKPSLAPLLLLPVL, FYTLITAFGVPLVFNIAAWPL, WLILLLRVVFLLLAVGSLWLL, FWLLTSSGVLLTASFLLLSLG, WPAWLAIYGFMTMDRWLLGHW, and YMKITYGWSLMLVVVFCVLYF.

Belongs to the glycosyltransferase 87 family.

The protein localises to the cell membrane. It catalyses the reaction Adds an alpha-D-arabinofuranosyl group from trans,octacis-decaprenylphospho-beta-D-arabinofuranose at the 3-O-position of an alpha-(1-&gt;5)-arabinofuranan chain attached to a beta-(1-&gt;5)-galactofuranan chain.. Its pathway is cell wall biogenesis; cell wall polysaccharide biosynthesis. Its function is as follows. Involved in the biosynthesis of the arabinogalactan (AG) region of the mycolylarabinogalactan-peptidoglycan (mAGP) complex, an essential component of the mycobacterial cell wall. Catalyzes the addition of an arabinofuranosyl (Araf) residue from the sugar donor beta-D-arabinofuranosyl-1-monophosphoryldecaprenol (DPA) on the C-3 of an alpha-(1-&gt;5)-linked Araf from the arabinan backbone of AG. The polypeptide is Alpha-(1-&gt;3)-arabinofuranosyltransferase (aftC) (Mycolicibacterium smegmatis (strain ATCC 700084 / mc(2)155) (Mycobacterium smegmatis)).